The sequence spans 315 residues: MPPKPAPGDNEGNASGSTPTPPPPPPARTAEEARLRLAEMEREREQEQLLEEMNSNTPAEDARNISRLTQLAALLRREQTNVHVTNMALEIGRPALQPPPNMRGDPTNMYSQVSSDFLWKIKPQRISNNMATSEDMVKIQVALEGLGVPTESVKEVIIRLVLNCANTSSSVYQDPKGVIEWDGGAIIADDVVGVITKHSTLRKVCRLYAAVAWNYMHLQQTPPSDWSAMGFHPNVKYAAFDFFDYVENGAAIRPSGGIVPKPTRAEYVAYNTYKMLALNKANNNDTFGNFDSAITGGRQGPAIHNNLNNANNKTL.

Positions 1-60 (MPPKPAPGDNEGNASGSTPTPPPPPPARTAEEARLRLAEMEREREQEQLLEEMNSNTPAE) are disordered. The span at 29–47 (TAEEARLRLAEMEREREQE) shows a compositional bias: basic and acidic residues.

The protein belongs to the potexviruses coat protein family.

The protein resides in the virion. Required for genome encapsidation. Forms ribonucleoprotein complexes along with TGB1 helicase and viral RNA. This chain is Capsid protein, found in Chrysanthemum morifolium (Florist's daisy).